The sequence spans 378 residues: Anhydro-N-acetylmuramic acid kinase (378 aa).

An ATP-binding site is contributed by Gly-9–Asp-16.

The protein belongs to the anhydro-N-acetylmuramic acid kinase family.

It carries out the reaction 1,6-anhydro-N-acetyl-beta-muramate + ATP + H2O = N-acetyl-D-muramate 6-phosphate + ADP + H(+). It functions in the pathway amino-sugar metabolism; 1,6-anhydro-N-acetylmuramate degradation. Its pathway is cell wall biogenesis; peptidoglycan recycling. Catalyzes the specific phosphorylation of 1,6-anhydro-N-acetylmuramic acid (anhMurNAc) with the simultaneous cleavage of the 1,6-anhydro ring, generating MurNAc-6-P. Is required for the utilization of anhMurNAc either imported from the medium or derived from its own cell wall murein, and thus plays a role in cell wall recycling. This chain is Anhydro-N-acetylmuramic acid kinase, found in Synechococcus sp. (strain ATCC 27144 / PCC 6301 / SAUG 1402/1) (Anacystis nidulans).